Consider the following 71-residue polypeptide: Defensin 1 (71 aa).

An N-terminal signal peptide occupies residues lysine 1–alanine 25. Disulfide bonds link cysteine 28–cysteine 71, cysteine 39–cysteine 60, and cysteine 45–cysteine 65.

Belongs to the DEFL family. In terms of assembly, may form dimers. Not glycosylated. In terms of processing, contains 4 disulfide bonds. Post-translationally, met-61 and Met-63 might be oxidized in some molecules.

Probably has antifungal activity. This is Defensin 1 from Arachis hypogaea (Peanut).